The chain runs to 686 residues: Rhophilin-2 (686 aa).

In terms of domain architecture, REM-1 spans 26 to 100 (NPLAQTGRSK…LEGLNISVGV (75 aa)). The tract at residues 46–66 (QILKAMRMRTGAENLLKAATN) is interaction with Rho. Residues 111–460 (PLIPLGLKET…QLKYTQLRED (350 aa)) form the BRO1 domain. The 79-residue stretch at 515 to 593 (RSIHFTAEEG…DDIEMKVVSL (79 aa)) folds into the PDZ domain. T655 carries the phosphothreonine modification.

Belongs to the RHPN family. In terms of assembly, interacts with GTP-bound RhoA and RhoB. Interacts with both GTP- and GDP-bound RhoA. Interacts with KRT18.

It localises to the cytoplasm. The protein localises to the perinuclear region. Binds specifically to GTP-Rho. May function in a Rho pathway to limit stress fiber formation and/or increase the turnover of F-actin structures in the absence of high levels of RhoA activity. This Bos taurus (Bovine) protein is Rhophilin-2 (RHPN2).